We begin with the raw amino-acid sequence, 421 residues long: F-box only protein 5 (421 aa).

Position 85 is a phosphoserine (S85). The tract at residues 114 to 219 (ELEASRLYED…IGKKMGLEHL (106 aa)) is interaction with EVI5. The F-box domain occupies 223-273 (AELSRRGFVHLLANILTKLSGMDLVNLSKVSRIWKKILENNKGAFQLYSKT). The segment at 236–313 (NILTKLSGMD…KSSTWAPPKK (78 aa)) is sufficient for interaction with RPS6KA2; Prevents association of CDC20 with RPS6KA2. A requires for efficient binding to CDC20 region spans residues 236–383 (NILTKLSGMD…SCQFEYCTKC (148 aa)). The tract at residues 280-421 (SSKLSLHATT…KKSKKNLQRL (142 aa)) is inhibits APC ubiquitin ligase activity. The tract at residues 296-299 (RAAL) is competitively blocks access of APC substrates to the D-box coreceptor formed by FZR1 and ANAPC10. A ZBR-type zinc finger spans residues 348-396 (SLKACVRCNFPAKYDHYLERAVCKRESCQFEYCTKCLCAYHNNKDCLNG). The Zn(2+) site is built by C352, C355, C370, C375, C380, C383, H388, and C393. Residues 352–394 (CVRCNFPAKYDHYLERAVCKRESCQFEYCTKCLCAYHNNKDCL) form an allows a rapid multiple mono-ubiquitination of the APC substrate, but strongly inhibits the slow ubiquitin chain elongation catalyzed by UBCH10 region. Residues 411 to 421 (TKKSKKNLQRL) are sufficient to suppress UBE2S activity; essential for interaction with UBE2S; competitively inhibits the rapide ubiquitin chain elongation by UBE2D1 which blocks UBE2D1 with APC; indispensable for recruitment and position of FBXO5 to the catalytic site of APC; abrogates the inhibition of ubiquitin chain assembly primarily catalyzed by UBE2S; inhibits the ubiquitination by either UBE2C or UBE2D1.

As to quaternary structure, part of a SCF (SKP1-cullin-F-box) protein ligase complex. Interacts with BTRC; mediates proteolysis by the SCF ubiquitin ligase complex leading to activation of APC in late mitosis and subsequent mitotic progression. Interacts with FZR1/CDH1 and the N-terminal substrate-binding domain of CDC20; prevents APC activation. Also interacts with EVI5 which blocks its phosphorylation by PLK1 and prevents its subsequent binding to BTRC and degradation. Interacts simultaneously with anaphase promoting complex (APC), through at least ANAPC2, CDC23, CDC27, the APC substrate GMNN and the APC activator FZR1. Interacts with UBE2S; interferes with the activity of UBE2S mainly by disrupting the dynamic electrostatic association between the C-terminal tail of UBE2S and ANAPC2. Interacts with RPS6KA2; cooperates to induce the metaphase arrest of early blastomeres; increases and stabilizes interaction of FBXO5 with CDC20. In terms of processing, phosphorylation by CDK2 and subsequently by PLK1 triggers degradation during early mitosis through ubiquitin-mediated proteolysis by the SCF ubiquitin ligase complex containing the F-box protein BTRC. This degradation is necessary for the activation of APC in late mitosis and subsequent mitotic progression. Phosphorylated by RPS6KA2; increases and stabilizes interaction with CDC20. Ubiquitinated by the SCF(BTRC) complex following phosphorylation by PLK1. Undergoes both 'Lys-11' and 'Lys-48'-linked polyubiquitination by APC-FZR1 complex leading to degradation during G1 phase by the proteasome. Degraded through the SCF(BTRC) complex; degradation occurs during oocyte maturation, between germinal vesicle breakdown (GVBD) and meiosis I, and is required for the meiosis I-meiosis II transition. In terms of tissue distribution, expressed in oocytes and granulosa cells. Expressed in proliferating cells compartments in hair follicle and skin epidermis, spermatogonia, and intestinal crypts.

It localises to the nucleus. The protein localises to the cytoplasm. The protein resides in the cytoskeleton. It is found in the spindle. The protein operates within protein modification; protein ubiquitination. In terms of biological role, regulator of APC activity during mitotic and meiotic cell cycle. During mitotic cell cycle plays a role as both substrate and inhibitor of APC-FZR1 complex. During G1 phase, plays a role as substrate of APC-FZR1 complex E3 ligase. Then switches as an inhibitor of APC-FZR1 complex during S and G2 leading to cell-cycle commitment. As APC inhibitor, prevents the degradation of APC substrates at multiple levels: by interacting with APC and blocking access of APC substrates to the D-box co-receptor, formed by FZR1 and ANAPC10; by suppressing ubiquitin ligation and chain elongation by APC by preventing the UBE2C and UBE2S activities. Plays a role in genome integrity preservation by coordinating DNA replication with mitosis through APC inhibition in interphase to stabilize CCNA2 and GMNN in order to promote mitosis and prevent rereplication and DNA damage-induced cellular senescence. During oocyte maturation, plays a role in meiosis through inactivation of APC-FZR1 complex. Inhibits APC through RPS6KA2 interaction that increases FBXO5 affiniy for CDC20 leading to the metaphase arrest of the second meiotic division before fertilization. Controls entry into the first meiotic division through inactivation of APC-FZR1 complex. Promotes migration and osteogenic differentiation of mesenchymal stem cells. The protein is F-box only protein 5 of Mus musculus (Mouse).